We begin with the raw amino-acid sequence, 439 residues long: Niacin transporter NiaP (439 aa).

A run of 12 helical transmembrane segments spans residues 20-40, 57-77, 84-104, 108-128, 143-163, 169-189, 253-273, 288-308, 316-336, 338-358, 374-394, and 407-427; these read LWVV…IAFI, WIVS…GGLA, TVFA…AFAP, WLLA…PVAV, FIVL…LVSY, FGWH…YVII, LMLW…FTWL, FEYV…AAWL, ATLA…GQAD, VFNI…AWGV, FGAG…PIVV, and VFMM…ILGE.

It belongs to the major facilitator superfamily. Sugar transporter (TC 2.A.1.1) family.

The protein resides in the cell inner membrane. Its function is as follows. Functions as a high-affinity transporter of niacin (nicotinamide or nicotinate). Probably substantially contributes to niacin transport when its concentration in the medium is very low. In Acinetobacter baylyi (strain ATCC 33305 / BD413 / ADP1), this protein is Niacin transporter NiaP.